A 503-amino-acid polypeptide reads, in one-letter code: MTRARSYEIRTFGCQMNVHDSERLSGLLEDAGYVKAAPGATADLVVFNTCAVRENADNKLYGTLGHLAPVKAGRPGMQIAVGGCLAQKDRDTVVRKAPWVDVVFGTHNIGSLPVLLERARHNEQAQVEILESLEAFPSTLPAKRESAYAGWVSISVGCNNTCTFCIVPALRGKEVDRRPGDVLAEVQALVDQGVLEVTLLGQNVNSYGASFADPDEPRDRGAFAKLLRACGGIEGLERVRFTSPHPAEFTDDVIEAMAQTPNICPQLHMPLQSGSDRVLKAMRRSYRKARYLGIIEKVRAAMPHAAITTDIIVGFPGETEEDFQETLDVVRQARFTSAFTFQYSKRPGTPAAEMADQVPKQVVQERYDRLIALQEEISLAANRELIGTEVELLVAEGSGKKNAATARMSGRARDGRLVHFRPGGTAEPIRPGDLVTVDITEAAPHHLIADAPVKTHRRTRAGDAHERGITPKTAPIGVGLGLPRIGAPAPEPVAAGCSTGCGA.

An MTTase N-terminal domain is found at 5 to 121 (RSYEIRTFGC…LPVLLERARH (117 aa)). [4Fe-4S] cluster-binding residues include C14, C50, C84, C158, C162, and C165. The Radical SAM core domain occupies 144–380 (RESAYAGWVS…IALQEEISLA (237 aa)). In terms of domain architecture, TRAM spans 383 to 453 (RELIGTEVEL…PHHLIADAPV (71 aa)).

The protein belongs to the methylthiotransferase family. MiaB subfamily. Monomer. [4Fe-4S] cluster is required as a cofactor.

It is found in the cytoplasm. It catalyses the reaction N(6)-dimethylallyladenosine(37) in tRNA + (sulfur carrier)-SH + AH2 + 2 S-adenosyl-L-methionine = 2-methylsulfanyl-N(6)-dimethylallyladenosine(37) in tRNA + (sulfur carrier)-H + 5'-deoxyadenosine + L-methionine + A + S-adenosyl-L-homocysteine + 2 H(+). In terms of biological role, catalyzes the methylthiolation of N6-(dimethylallyl)adenosine (i(6)A), leading to the formation of 2-methylthio-N6-(dimethylallyl)adenosine (ms(2)i(6)A) at position 37 in tRNAs that read codons beginning with uridine. The protein is tRNA-2-methylthio-N(6)-dimethylallyladenosine synthase of Nocardia farcinica (strain IFM 10152).